Consider the following 464-residue polypeptide: Bifunctional protein GlmU (464 aa).

The interval Met-1–Pro-231 is pyrophosphorylase. UDP-N-acetyl-alpha-D-glucosamine is bound by residues Lys-20, Gln-78, Gly-83 to Thr-84, Ser-105 to Asp-107, Gly-142, Glu-156, and Asn-229. Residue Asp-107 coordinates Mg(2+). Asn-229 is a Mg(2+) binding site. Residues Val-232–Gln-252 form a linker region. The N-acetyltransferase stretch occupies residues Gly-253–Lys-464. Arg-343 and Lys-361 together coordinate UDP-N-acetyl-alpha-D-glucosamine. His-373 functions as the Proton acceptor in the catalytic mechanism. Residues Tyr-376 and Asn-387 each contribute to the UDP-N-acetyl-alpha-D-glucosamine site. Acetyl-CoA-binding positions include Ala-390, Asn-396–Tyr-397, Ser-415, Gly-433, and Arg-450.

In the N-terminal section; belongs to the N-acetylglucosamine-1-phosphate uridyltransferase family. The protein in the C-terminal section; belongs to the transferase hexapeptide repeat family. In terms of assembly, homotrimer. The cofactor is Mg(2+).

It is found in the cytoplasm. It catalyses the reaction alpha-D-glucosamine 1-phosphate + acetyl-CoA = N-acetyl-alpha-D-glucosamine 1-phosphate + CoA + H(+). The catalysed reaction is N-acetyl-alpha-D-glucosamine 1-phosphate + UTP + H(+) = UDP-N-acetyl-alpha-D-glucosamine + diphosphate. It functions in the pathway nucleotide-sugar biosynthesis; UDP-N-acetyl-alpha-D-glucosamine biosynthesis; N-acetyl-alpha-D-glucosamine 1-phosphate from alpha-D-glucosamine 6-phosphate (route II): step 2/2. Its pathway is nucleotide-sugar biosynthesis; UDP-N-acetyl-alpha-D-glucosamine biosynthesis; UDP-N-acetyl-alpha-D-glucosamine from N-acetyl-alpha-D-glucosamine 1-phosphate: step 1/1. It participates in bacterial outer membrane biogenesis; LPS lipid A biosynthesis. Functionally, catalyzes the last two sequential reactions in the de novo biosynthetic pathway for UDP-N-acetylglucosamine (UDP-GlcNAc). The C-terminal domain catalyzes the transfer of acetyl group from acetyl coenzyme A to glucosamine-1-phosphate (GlcN-1-P) to produce N-acetylglucosamine-1-phosphate (GlcNAc-1-P), which is converted into UDP-GlcNAc by the transfer of uridine 5-monophosphate (from uridine 5-triphosphate), a reaction catalyzed by the N-terminal domain. The polypeptide is Bifunctional protein GlmU (Albidiferax ferrireducens (strain ATCC BAA-621 / DSM 15236 / T118) (Rhodoferax ferrireducens)).